A 249-amino-acid chain; its full sequence is Selenoprotein BthD (249 aa).

The disordered stretch occupies residues Met-1–Leu-22. Basic and acidic residues predominate over residues Lys-8–Gly-19. The cysteinyl-selenocysteine (Cys-Sec); redox-active cross-link spans Cys-34–Sec-37. Residue Sec-37 is a non-standard amino acid, selenocysteine. A disordered region spans residues Gln-122–Arg-249. Ser-147 bears the Phosphoserine mark. The span at Glu-175 to Lys-198 shows a compositional bias: basic and acidic residues. The span at Thr-199 to Ala-210 shows a compositional bias: basic residues.

In terms of tissue distribution, expressed in the developing salivary gland at late stages of embryogenesis. Also expressed in brain, neuroblast and wing disk.

The protein resides in the cytoplasm. The protein localises to the secreted. Its function is as follows. May be involved in a redox-related process. Required for survival and specifically for salivary gland morphogenesis. This is Selenoprotein BthD (BthD) from Drosophila melanogaster (Fruit fly).